The sequence spans 589 residues: MSQSNTPLKRKKTENGYSENGSTTGATSNQIRELKRATTVDYVYRDQESKDKIKPLNGFVTPLLTDLYQITMAYSLWKNNRHEIPAVFDLYFRKSPFGGEFTVFAGLEEVIRFVSDFHYTKEEVGFIKEMIPDCEQEFLDYLSKLDSSSVTLYAMKEGSVVFPRVPLLRVEGPMILCQLFETTLLCLVNFASLVATNAARHRLAVGKEKVMLEFGLRRAQGPDGAMSASRYSYLGGADGTSNVLAHCFFGIPIRGTHAHSFITNYSGPDELLDASIKDTNGNVHNLLEMSQKYRDELGYTATNLSELVAFVAYARTFPNGLVALVDTYDTLASGVPNFICVALALHQLGYKAVGIRLDSGDLSYLSKASRKLFKQIGEQFKIDYFEKFSIVASNDLNEPTIIALNRQGHEIDVFAIGTNLVTCQAQPALGCVYKLVEINGSPRIKLSQEANKITLPGRKTAYRLFGSEGHPLVDLLVDDNDMIKDGSKQIPQVGKKVLCLHPFEEQKRVIVTPVQIEKLHHIVFEKGQLTMPLPALNDIREYCFQQISKVREDHLRNSNPTPYKVSVTKELFDTLHNLWLDSVPIKEMK.

Positions 1–30 (MSQSNTPLKRKKTENGYSENGSTTGATSNQ) are disordered. The segment covering 15-30 (NGYSENGSTTGATSNQ) has biased composition (polar residues). Residues Y68 and T256 each coordinate nicotinate. Phosphohistidine is present on H259. Residue R356 coordinates nicotinate. T418 is a 5-phospho-alpha-D-ribose 1-diphosphate binding site.

Belongs to the NAPRTase family. Mg(2+) is required as a cofactor. Mn(2+) serves as cofactor. Transiently phosphorylated on a His residue during the reaction cycle. Phosphorylation strongly increases the affinity for substrates and increases the rate of nicotinate D-ribonucleotide production. Dephosphorylation regenerates the low-affinity form of the enzyme, leading to product release.

The enzyme catalyses nicotinate + 5-phospho-alpha-D-ribose 1-diphosphate + ATP + H2O = nicotinate beta-D-ribonucleotide + ADP + phosphate + diphosphate. It participates in cofactor biosynthesis; NAD(+) biosynthesis; nicotinate D-ribonucleotide from nicotinate: step 1/1. In terms of biological role, catalyzes the first step in the biosynthesis of NAD from nicotinic acid, the ATP-dependent synthesis of beta-nicotinate D-ribonucleotide from nicotinate and 5-phospho-D-ribose 1-phosphate. Helps prevent cellular oxidative stress via its role in NAD biosynthesis. This is Nicotinate phosphoribosyltransferase (naprt) from Dictyostelium discoideum (Social amoeba).